A 331-amino-acid polypeptide reads, in one-letter code: Ferredoxin--NADP reductase 2 (331 aa).

The FAD site is built by E37, Q45, Y50, V90, F124, D286, and T327.

This sequence belongs to the ferredoxin--NADP reductase type 2 family. As to quaternary structure, homodimer. It depends on FAD as a cofactor.

It carries out the reaction 2 reduced [2Fe-2S]-[ferredoxin] + NADP(+) + H(+) = 2 oxidized [2Fe-2S]-[ferredoxin] + NADPH. The sequence is that of Ferredoxin--NADP reductase 2 from Listeria monocytogenes serotype 4b (strain F2365).